The following is a 367-amino-acid chain: Histidinol-phosphate aminotransferase (367 aa).

K227 bears the N6-(pyridoxal phosphate)lysine mark.

This sequence belongs to the class-II pyridoxal-phosphate-dependent aminotransferase family. Histidinol-phosphate aminotransferase subfamily. In terms of assembly, homodimer. The cofactor is pyridoxal 5'-phosphate.

It catalyses the reaction L-histidinol phosphate + 2-oxoglutarate = 3-(imidazol-4-yl)-2-oxopropyl phosphate + L-glutamate. The protein operates within amino-acid biosynthesis; L-histidine biosynthesis; L-histidine from 5-phospho-alpha-D-ribose 1-diphosphate: step 7/9. The sequence is that of Histidinol-phosphate aminotransferase from Leptospira borgpetersenii serovar Hardjo-bovis (strain JB197).